A 145-amino-acid chain; its full sequence is Neuropeptide-like protein 68 (145 aa).

The first 15 residues, 1–15 (MLLVLLFSLFSVGFG), serve as a signal peptide directing secretion. The disordered stretch occupies residues 41-65 (SSSSEDDTPDFPSLRDKRGVDPMSI).

The protein resides in the secreted. The protein is Neuropeptide-like protein 68 of Caenorhabditis elegans.